A 171-amino-acid chain; its full sequence is uncharacterized protein (171 aa).

This is an uncharacterized protein from Caenorhabditis elegans.